Consider the following 218-residue polypeptide: Deoxyribose-phosphate aldolase (218 aa).

The active-site Proton donor/acceptor is aspartate 89. Lysine 152 (schiff-base intermediate with acetaldehyde) is an active-site residue. Catalysis depends on lysine 182, which acts as the Proton donor/acceptor.

This sequence belongs to the DeoC/FbaB aldolase family. DeoC type 1 subfamily.

The protein localises to the cytoplasm. It catalyses the reaction 2-deoxy-D-ribose 5-phosphate = D-glyceraldehyde 3-phosphate + acetaldehyde. Its pathway is carbohydrate degradation; 2-deoxy-D-ribose 1-phosphate degradation; D-glyceraldehyde 3-phosphate and acetaldehyde from 2-deoxy-alpha-D-ribose 1-phosphate: step 2/2. In terms of biological role, catalyzes a reversible aldol reaction between acetaldehyde and D-glyceraldehyde 3-phosphate to generate 2-deoxy-D-ribose 5-phosphate. The protein is Deoxyribose-phosphate aldolase of Corynebacterium diphtheriae (strain ATCC 700971 / NCTC 13129 / Biotype gravis).